The sequence spans 563 residues: Dihydroxy-acid dehydratase (563 aa).

Residue aspartate 79 coordinates Mg(2+). Residue cysteine 120 coordinates [2Fe-2S] cluster. Mg(2+)-binding residues include aspartate 121 and lysine 122. Lysine 122 carries the N6-carboxylysine modification. Cysteine 193 lines the [2Fe-2S] cluster pocket. Glutamate 451 is a binding site for Mg(2+). Serine 477 acts as the Proton acceptor in catalysis.

This sequence belongs to the IlvD/Edd family. As to quaternary structure, homodimer. Requires [2Fe-2S] cluster as cofactor. Mg(2+) serves as cofactor.

It carries out the reaction (2R)-2,3-dihydroxy-3-methylbutanoate = 3-methyl-2-oxobutanoate + H2O. The catalysed reaction is (2R,3R)-2,3-dihydroxy-3-methylpentanoate = (S)-3-methyl-2-oxopentanoate + H2O. It participates in amino-acid biosynthesis; L-isoleucine biosynthesis; L-isoleucine from 2-oxobutanoate: step 3/4. The protein operates within amino-acid biosynthesis; L-valine biosynthesis; L-valine from pyruvate: step 3/4. Its function is as follows. Functions in the biosynthesis of branched-chain amino acids. Catalyzes the dehydration of (2R,3R)-2,3-dihydroxy-3-methylpentanoate (2,3-dihydroxy-3-methylvalerate) into 2-oxo-3-methylpentanoate (2-oxo-3-methylvalerate) and of (2R)-2,3-dihydroxy-3-methylbutanoate (2,3-dihydroxyisovalerate) into 2-oxo-3-methylbutanoate (2-oxoisovalerate), the penultimate precursor to L-isoleucine and L-valine, respectively. The chain is Dihydroxy-acid dehydratase from Sulfurovum sp. (strain NBC37-1).